The chain runs to 178 residues: MAPPPPAPPSVTLRTVLLLLRVLTAAFLLITVVLISTNTVTLEISSTSIKLPFNDVYAYRYMLSAAVIGLVYAVVQLFLTISQFATGKTHPLTYQFDFYGDKVISYLLATGSAAGFGVSKDLKDTYIALIEFDSTDPVDKFFSKGYASASLLLFAFVSLAVLSVFSSLALSKRPVPVS.

A2 is subject to N-acetylalanine. Residues 2 to 14 (APPPPAPPSVTLR) lie on the Cytoplasmic side of the membrane. The chain crosses the membrane as a helical span at residues 15 to 35 (TVLLLLRVLTAAFLLITVVLI). Over 36-60 (STNTVTLEISSTSIKLPFNDVYAYR) the chain is Extracellular. Residues 61-81 (YMLSAAVIGLVYAVVQLFLTI) form a helical membrane-spanning segment. The Cytoplasmic portion of the chain corresponds to 82-97 (SQFATGKTHPLTYQFD). The helical transmembrane segment at 98 to 118 (FYGDKVISYLLATGSAAGFGV) threads the bilayer. The Extracellular portion of the chain corresponds to 119–149 (SKDLKDTYIALIEFDSTDPVDKFFSKGYASA). Residues 150–170 (SLLLFAFVSLAVLSVFSSLAL) traverse the membrane as a helical segment. Over 171–178 (SKRPVPVS) the chain is Cytoplasmic.

It belongs to the Casparian strip membrane proteins (CASP) family. Homodimer and heterodimers. In terms of tissue distribution, expressed in the root epidermis.

It localises to the cell membrane. The protein is CASP-like protein 4D1 of Arabidopsis thaliana (Mouse-ear cress).